The sequence spans 86 residues: MAHKKGASSSRNGRDSAAQRLGVKRYGGQVVKAGEILVRQRGTKFHPGVNVGRGGDDTLFAKTAGAVEFGIKRGRKTVSIVGSTTA.

The interval 1–21 (MAHKKGASSSRNGRDSAAQRL) is disordered.

Belongs to the bacterial ribosomal protein bL27 family.

In Mycobacterium tuberculosis (strain CDC 1551 / Oshkosh), this protein is Large ribosomal subunit protein bL27 (rpmA).